We begin with the raw amino-acid sequence, 236 residues long: Phosphoribosylaminoimidazole-succinocarboxamide synthase (236 aa).

The protein belongs to the SAICAR synthetase family.

The catalysed reaction is 5-amino-1-(5-phospho-D-ribosyl)imidazole-4-carboxylate + L-aspartate + ATP = (2S)-2-[5-amino-1-(5-phospho-beta-D-ribosyl)imidazole-4-carboxamido]succinate + ADP + phosphate + 2 H(+). It participates in purine metabolism; IMP biosynthesis via de novo pathway; 5-amino-1-(5-phospho-D-ribosyl)imidazole-4-carboxamide from 5-amino-1-(5-phospho-D-ribosyl)imidazole-4-carboxylate: step 1/2. The chain is Phosphoribosylaminoimidazole-succinocarboxamide synthase from Rickettsia akari (strain Hartford).